The primary structure comprises 506 residues: Maturase K (506 aa).

It belongs to the intron maturase 2 family. MatK subfamily.

Its subcellular location is the plastid. The protein resides in the chloroplast. In terms of biological role, usually encoded in the trnK tRNA gene intron. Probably assists in splicing its own and other chloroplast group II introns. This chain is Maturase K, found in Rhododendron hippophaeoides (Rhododendron).